A 476-amino-acid polypeptide reads, in one-letter code: MHQEIQSEVVIIGSGPAGYSAAFRCADLGLETVLIEHQERLGGVCLNVGCIPSKSLLHIAKIIKDASELSESGVFFNKPIIDIKKINNWKEKIIKKLTTGLSNMGEKRKVRIVQGKALFNTDHSVLVKNKKNDFTIFFKHAIIATGSKPIKIPSLPNEDNRIWNSTDALSLKSIPNRFLIIGGGIIGLEMATIYSALGSKVDIVDRFNAFLPSVDKDITDIYIKSIKKRFKLLLNTHVKSVEKSKDNDLIVKIAEENSDENVCCYDNILVAIGRSPNVDFLGLEKIGLKLNESGFIEINQQLKTNISHIYAIGDVTGFPMLAHKAVQQAHIAAEVISGKKHYFEPKVIPSVAYTDPEIAWVGLSEKEAENNDIDYEVSLFPWSASGRAHASNCTLGMTKLIFNKNTNKIIGGSIIGTNASELISEIGLAIEMGSDAEDISLTIHPHPTLSESISLASEVFQGTITDLLNLKKSLLN.

FAD-binding positions include 36 to 45 (EHQERLGGVC), Lys54, and Ala117. Cys45 and Cys50 form a disulfide bridge. NAD(+)-binding positions include 182-186 (GGGII), Asp205, Val238, and 271-274 (AIGR). FAD contacts are provided by Asp314 and Ala322. The active-site Proton acceptor is His446.

The protein belongs to the class-I pyridine nucleotide-disulfide oxidoreductase family. Homodimer. Requires FAD as cofactor.

It localises to the cytoplasm. The catalysed reaction is N(6)-[(R)-dihydrolipoyl]-L-lysyl-[protein] + NAD(+) = N(6)-[(R)-lipoyl]-L-lysyl-[protein] + NADH + H(+). In terms of biological role, lipoamide dehydrogenase is a component of the alpha-ketoacid dehydrogenase complexes. The sequence is that of Dihydrolipoyl dehydrogenase (lpdA) from Buchnera aphidicola subsp. Schizaphis graminum (strain Sg).